The sequence spans 504 residues: WD repeat-containing protein 55 homolog (504 aa).

Disordered stretches follow at residues 1 to 21 and 33 to 132; these read MDRHEHFKAPANEDELDDIDD and QEVL…DDDD. 2 stretches are compositionally biased toward acidic residues: residues 12–21 and 33–48; these read NEDELDDIDD and QEVLNESESDDDEYDL. Residues 63–74 are compositionally biased toward low complexity; sequence SSSNESISSDGS. Residues 78-89 show a composition bias toward acidic residues; that stretch reads NAEDSDSDDSMI. WD repeat units follow at residues 156 to 195, 200 to 239, 243 to 281, 284 to 323, 326 to 365, and 410 to 449; these read KLEDFITDICFHPDRDIIALATIIGDVHLYEYGNEENKLL, VHAKACRDVEFTEDGRSLITCSKDKCVMVTDMETEKLKKL, AHDDAINKLHVLDERLFATGDDAGTVKLWDFRTKDAIFE, EVEDQITQMLTNEQNKLLLATSADGYLTTYNIGARKLYVQ, PYEEELNCMGIYRGSSKLVAGTSKGRLYTYNWGYFGYHCD, and QHNMPIESLDINCSGELLASSSHNNDVRFWNVKYFEDFGD. The segment at 477–504 is disordered; the sequence is FFADMTKDQDDDDNDGGNDTAAGPSNVT.

This sequence belongs to the WD repeat WDR55 family.

This chain is WD repeat-containing protein 55 homolog, found in Drosophila virilis (Fruit fly).